The following is a 141-amino-acid chain: Large ribosomal subunit protein uL13 (141 aa).

It belongs to the universal ribosomal protein uL13 family. As to quaternary structure, part of the 50S ribosomal subunit.

In terms of biological role, this protein is one of the early assembly proteins of the 50S ribosomal subunit, although it is not seen to bind rRNA by itself. It is important during the early stages of 50S assembly. The polypeptide is Large ribosomal subunit protein uL13 (Helicobacter pylori (strain G27)).